The chain runs to 483 residues: Regulatory protein ViaA (483 aa).

It belongs to the ViaA family. In terms of assembly, homodimer. Interacts with RavA.

It is found in the cytoplasm. Its function is as follows. Component of the RavA-ViaA chaperone complex, which may act on the membrane to optimize the function of some of the respiratory chains. ViaA stimulates the ATPase activity of RavA. This chain is Regulatory protein ViaA, found in Escherichia fergusonii (strain ATCC 35469 / DSM 13698 / CCUG 18766 / IAM 14443 / JCM 21226 / LMG 7866 / NBRC 102419 / NCTC 12128 / CDC 0568-73).